A 425-amino-acid polypeptide reads, in one-letter code: D-amino acid dehydrogenase (425 aa).

V3 to Y17 contributes to the FAD binding site.

It belongs to the DadA oxidoreductase family. The cofactor is FAD.

The catalysed reaction is a D-alpha-amino acid + A + H2O = a 2-oxocarboxylate + AH2 + NH4(+). The protein operates within amino-acid degradation; D-alanine degradation; NH(3) and pyruvate from D-alanine: step 1/1. Its function is as follows. Oxidative deamination of D-amino acids. This is D-amino acid dehydrogenase from Rhodopseudomonas palustris (strain HaA2).